Consider the following 285-residue polypeptide: Small ribosomal subunit protein uS2 (285 aa).

The tract at residues 228 to 285 (RAGLSADKDAKPEAGAGEPLAEWEQELLSQAAPAAEAEAAPAAEAEAAPAAEAPATEA) is disordered. Over residues 258–285 (AAPAAEAEAAPAAEAEAAPAAEAPATEA) the composition is skewed to low complexity.

The protein belongs to the universal ribosomal protein uS2 family.

This is Small ribosomal subunit protein uS2 from Rhodococcus erythropolis (strain PR4 / NBRC 100887).